Reading from the N-terminus, the 547-residue chain is Chaperonin GroEL 1 (547 aa).

ATP is bound by residues 30 to 33, Lys51, 87 to 91, Gly415, and Asp496; these read TLGP and DGTTT.

This sequence belongs to the chaperonin (HSP60) family. Forms a cylinder of 14 subunits composed of two heptameric rings stacked back-to-back. Interacts with the co-chaperonin GroES.

Its subcellular location is the cytoplasm. It carries out the reaction ATP + H2O + a folded polypeptide = ADP + phosphate + an unfolded polypeptide.. Functionally, together with its co-chaperonin GroES, plays an essential role in assisting protein folding. The GroEL-GroES system forms a nano-cage that allows encapsulation of the non-native substrate proteins and provides a physical environment optimized to promote and accelerate protein folding. This Rhodopseudomonas palustris (strain ATCC BAA-98 / CGA009) protein is Chaperonin GroEL 1.